Consider the following 99-residue polypeptide: Small ribosomal subunit protein bS6c (99 aa).

This sequence belongs to the bacterial ribosomal protein bS6 family.

The protein localises to the plastid. It localises to the chloroplast. Binds together with bS18 to 16S ribosomal RNA. This chain is Small ribosomal subunit protein bS6c, found in Cyanidioschyzon merolae (strain NIES-3377 / 10D) (Unicellular red alga).